The chain runs to 544 residues: Protein angel homolog 2 (544 aa).

The protein belongs to the CCR4/nocturin family.

The polypeptide is Protein angel homolog 2 (Angel2) (Mus musculus (Mouse)).